The sequence spans 388 residues: Chorismate synthase (388 aa).

Positions 39 and 45 each coordinate NADP(+). FMN is bound by residues 132-134, 251-252, Gly296, 311-315, and Arg337; these read RSS, NA, and KPIPT.

Belongs to the chorismate synthase family. In terms of assembly, homotetramer. It depends on FMNH2 as a cofactor.

The enzyme catalyses 5-O-(1-carboxyvinyl)-3-phosphoshikimate = chorismate + phosphate. Its pathway is metabolic intermediate biosynthesis; chorismate biosynthesis; chorismate from D-erythrose 4-phosphate and phosphoenolpyruvate: step 7/7. Its function is as follows. Catalyzes the anti-1,4-elimination of the C-3 phosphate and the C-6 proR hydrogen from 5-enolpyruvylshikimate-3-phosphate (EPSP) to yield chorismate, which is the branch point compound that serves as the starting substrate for the three terminal pathways of aromatic amino acid biosynthesis. This reaction introduces a second double bond into the aromatic ring system. In Staphylococcus aureus (strain bovine RF122 / ET3-1), this protein is Chorismate synthase.